Consider the following 167-residue polypeptide: Transcription factor E (167 aa).

One can recognise an HTH TFE/IIEalpha-type domain in the interval 8 to 90 (NDKVIRGYLI…LWHLDFSDVE (83 aa)).

This sequence belongs to the TFE family. Monomer. Interaction with RNA polymerase subunits RpoF and RpoE is necessary for Tfe stimulatory transcription activity. Able to interact with Tbp and RNA polymerase in the absence of DNA promoter. Interacts both with the preinitiation and elongation complexes.

Functionally, transcription factor that plays a role in the activation of archaeal genes transcribed by RNA polymerase. Facilitates transcription initiation by enhancing TATA-box recognition by TATA-box-binding protein (Tbp), and transcription factor B (Tfb) and RNA polymerase recruitment. Not absolutely required for transcription in vitro, but particularly important in cases where Tbp or Tfb function is not optimal. It dynamically alters the nucleic acid-binding properties of RNA polymerases by stabilizing the initiation complex and destabilizing elongation complexes. Seems to translocate with the RNA polymerase following initiation and acts by binding to the non template strand of the transcription bubble in elongation complexes. This chain is Transcription factor E, found in Methanosarcina acetivorans (strain ATCC 35395 / DSM 2834 / JCM 12185 / C2A).